The sequence spans 181 residues: TATA-box-binding protein (181 aa).

2 repeat units span residues 7–83 (IVNV…IKEL) and 98–173 (VQNM…SKTL).

The protein belongs to the TBP family.

Functionally, general factor that plays a role in the activation of archaeal genes transcribed by RNA polymerase. Binds specifically to the TATA box promoter element which lies close to the position of transcription initiation. The sequence is that of TATA-box-binding protein from Methanococcus maripaludis (strain C6 / ATCC BAA-1332).